We begin with the raw amino-acid sequence, 238 residues long: MLESVSVDLQGNNFTLLVIQTHTTCTSQIQLELTQKIKNSPSFFSNNTPVVINVENINHHDDWFNLYQTISNIGLFIIGVCCCYNKKLKNIITQSGLPILTKGNIIKSHKNTIKTNYTKPTFDDKTNAISKTQTIHTPIRSGQRIYARNRDLIIISNVSSGAEVIADGNIHIYGSVRGRVLAGASGCEQSQIFCTKLSPELISIGGYYWLNDQIPPEFLGKSARFYLQNHTLIIQHIS.

The protein belongs to the MinC family. In terms of assembly, interacts with MinD and FtsZ.

Functionally, cell division inhibitor that blocks the formation of polar Z ring septums. Rapidly oscillates between the poles of the cell to destabilize FtsZ filaments that have formed before they mature into polar Z rings. Prevents FtsZ polymerization. This Blochmanniella floridana protein is Probable septum site-determining protein MinC.